The following is an 880-amino-acid chain: Probable potassium channel AKT5 (880 aa).

At Met1–Asp82 the chain is on the cytoplasmic side. Residues Trp83–Leu103 form a helical membrane-spanning segment. At Gln104–Ser111 the chain is on the extracellular side. The helical transmembrane segment at Ile112–Ala132 threads the bilayer. At Phe133–Thr153 the chain is on the cytoplasmic side. Residues Ser154–Leu174 form a helical membrane-spanning segment. The Extracellular portion of the chain corresponds to His175–Gly182. Residues Ile183–Glu203 traverse the membrane as a helical; Voltage-sensor segment. Over Lys204–Lys217 the chain is Cytoplasmic. Residues Leu218–Ala238 form a helical membrane-spanning segment. The Extracellular segment spans residues His239–Val265. The segment at residues Thr266 to Gly285 is an intramembrane region (pore-forming). Residues Asn286 to Arg291 lie on the Extracellular side of the membrane. Residues Ala292 to Met312 traverse the membrane as a helical segment. Over Thr313–Ser880 the chain is Cytoplasmic. Leu396–Lys517 is an a nucleoside 3',5'-cyclic phosphate binding site. 5 ANK repeats span residues Asp541–Glu570, Asn574–Ile603, Glu607–Phe636, Asp637–Leu667, and Asn671–Lys700. A KHA domain is found at Val809–Ser880.

Belongs to the potassium channel family. Plant (TC 1.A.1.4) subfamily. In terms of assembly, the potassium channel is probably composed of a homo- or heterotetrameric complex of pore-forming subunits. As to expression, predominantly expressed in flowers.

It localises to the membrane. In terms of biological role, probable potassium channel. May interact with the cytoskeleton or with regulatory proteins. The chain is Probable potassium channel AKT5 (AKT5) from Arabidopsis thaliana (Mouse-ear cress).